The primary structure comprises 198 residues: COMM domain-containing protein 9 (198 aa).

Position 2 is an N-acetylalanine (A2). The COMM domain occupies 122 to 196; the sequence is RLVDLDWRVD…RIRDQLSAVA (75 aa).

This sequence belongs to the COMM domain-containing protein 9 family. In terms of assembly, component of the commander complex consisting of the CCC subcomplex and the retriever subcomplex. Component of the CCC (COMMD/CCDC22/CCDC93) subcomplex consisting of COMMD1, COMMD2, COMMD3, COMMD4, COMMD5, COMMD6, COMMD7, COMMD8, COMMD9, COMMD10, CCDC22 and CCDC93; within the complex forms a heterodimer with COMMD7. Interacts with RELB and NFKB1/p105. Interacts with CCDC22, CCDC93, SCNN1B, CUL1. As to expression, ubiquitous.

The protein localises to the nucleus. Its subcellular location is the cytoplasmic vesicle. Scaffold protein in the commander complex that is essential for endosomal recycling of transmembrane cargos; the commander complex is composed of the CCC subcomplex and the retriever subcomplex. May modulate activity of cullin-RING E3 ubiquitin ligase (CRL) complexes. May down-regulate activation of NF-kappa-B. Modulates Na(+) transport in epithelial cells by regulation of apical cell surface expression of amiloride-sensitive sodium channel (ENaC) subunits. The protein is COMM domain-containing protein 9 (COMMD9) of Homo sapiens (Human).